A 92-amino-acid chain; its full sequence is Small ribosomal subunit protein uS19 (92 aa).

Belongs to the universal ribosomal protein uS19 family.

Functionally, protein S19 forms a complex with S13 that binds strongly to the 16S ribosomal RNA. The protein is Small ribosomal subunit protein uS19 of Lactococcus lactis subsp. cremoris (strain MG1363).